Here is a 513-residue protein sequence, read N- to C-terminus: 5-aminolevulinate synthase, erythroid-specific, mitochondrial (513 aa).

The N-terminal 18 residues, 1–18 (MAAFLRCPLLARHPPLAR), are a transit peptide targeting the mitochondrion. A succinyl-CoA-binding site is contributed by Arg-98. Pyridoxal 5'-phosphate-binding residues include Cys-190 and Phe-191. Positions 212 and 231 each coordinate succinyl-CoA. Positions 264, 292, and 320 each coordinate pyridoxal 5'-phosphate. Residue Lys-323 is part of the active site. N6-(pyridoxal phosphate)lysine is present on Lys-323. The pyridoxal 5'-phosphate site is built by Thr-352 and Thr-353. Succinyl-CoA is bound at residue Thr-437.

Belongs to the class-II pyridoxal-phosphate-dependent aminotransferase family. Homodimer. Pyridoxal 5'-phosphate is required as a cofactor. As to expression, erythroid-specific.

Its subcellular location is the mitochondrion inner membrane. The catalysed reaction is succinyl-CoA + glycine + H(+) = 5-aminolevulinate + CO2 + CoA. It participates in porphyrin-containing compound metabolism; protoporphyrin-IX biosynthesis; 5-aminolevulinate from glycine: step 1/1. Its function is as follows. Catalyzes the pyridoxal 5'-phosphate (PLP)-dependent condensation of succinyl-CoA and glycine to form aminolevulinic acid (ALA), with CoA and CO2 as by-products. Contributes significantly to heme formation during erythropoiesis. This Gallus gallus (Chicken) protein is 5-aminolevulinate synthase, erythroid-specific, mitochondrial (ALAS2).